Reading from the N-terminus, the 339-residue chain is Ferredoxin--NADP reductase (339 aa).

Aspartate 32, glutamine 40, tyrosine 45, valine 85, phenylalanine 120, aspartate 287, and threonine 327 together coordinate FAD.

The protein belongs to the ferredoxin--NADP reductase type 2 family. As to quaternary structure, homodimer. FAD is required as a cofactor.

The enzyme catalyses 2 reduced [2Fe-2S]-[ferredoxin] + NADP(+) + H(+) = 2 oxidized [2Fe-2S]-[ferredoxin] + NADPH. The protein is Ferredoxin--NADP reductase of Wolbachia sp. subsp. Brugia malayi (strain TRS).